The chain runs to 663 residues: Guanine nucleotide exchange factor subunit RGP1 (663 aa).

6 positions are modified to phosphoserine: Ser-351, Ser-354, Ser-357, Ser-363, Ser-364, and Ser-370. The segment at 412–443 (GKDEDSSDPEPNDSHFSNEMVTSAESSLRSDA) is disordered. Positions 426–440 (HFSNEMVTSAESSLR) are enriched in polar residues.

Belongs to the RGP1 family. In terms of assembly, forms a complex with RIC1.

It is found in the golgi apparatus. Its function is as follows. The RIC1-RGP1 complex acts as a guanine nucleotide exchange factor (GEF), which activates YPT6 by exchanging bound GDP for free GTP. It is thereby required for efficient fusion of endosome-derived vesicles with the Golgi. The RIC1-RGP1 participates in the recycling of SNC1, presumably by mediating fusion of endosomal vesicles with the Golgi compartment. Functionally, required for proper mitotic growth. The chain is Guanine nucleotide exchange factor subunit RGP1 from Saccharomyces cerevisiae (strain ATCC 204508 / S288c) (Baker's yeast).